A 1782-amino-acid polypeptide reads, in one-letter code: Vitellogenin receptor (1782 aa).

The first 18 residues, 1-18 (MRFIVLLFICSFIYPCYV), serve as a signal peptide directing secretion. At 19–1663 (SSIGFRRISK…SINFSRNTRN (1645 aa)) the chain is on the extracellular side. 3 LDL-receptor class A domains span residues 35 to 72 (KCED…FECD), 81 to 118 (TCAK…DGCV), and 122 to 157 (NCTN…WNCK). Disulfide bonds link cysteine 36–cysteine 48, cysteine 43–cysteine 61, cysteine 55–cysteine 71, cysteine 82–cysteine 94, cysteine 89–cysteine 107, and cysteine 101–cysteine 117. Asparagine 122 is a glycosylation site (N-linked (GlcNAc...) asparagine). Cystine bridges form between cysteine 123–cysteine 134, cysteine 129–cysteine 147, and cysteine 141–cysteine 156. Asparagine 159 carries an N-linked (GlcNAc...) asparagine glycan. The LDL-receptor class A 4 domain occupies 166 to 205 (SCKTENYQYMCANHRCISLKVVCDKKDDCGDGSDEGPGCT). Intrachain disulfides connect cysteine 167-cysteine 181, cysteine 176-cysteine 194, and cysteine 188-cysteine 204. 2 N-linked (GlcNAc...) asparagine glycosylation sites follow: asparagine 208 and asparagine 239. The EGF-like 1 domain occupies 208 to 243 (NCSSAGCQSNCHQTPKGSVCTCKPGYKLQKDNRTCN). The EGF-like; calcium-binding domain maps to 244-283 (DIDECQAYGICDQDCMNVPGSYACTCQREYYLENDKRTCK). 3 cysteine pairs are disulfide-bonded: cysteine 248–cysteine 258, cysteine 254–cysteine 267, and cysteine 269–cysteine 282. LDL-receptor class B repeat units lie at residues 327 to 374 (DYVY…DWIT), 375 to 416 (KNIY…LPTQ), 417 to 460 (GKMY…DYPN), 461 to 501 (ERLY…TVFQ), and 502 to 544 (NKLY…DHSA). Residues 552–588 (PCYSNPCSQLCMLNQNKGYTCGCTLDKKLNADKHTCQ) enclose the EGF-like 2 domain. N-linked (GlcNAc...) asparagine glycosylation is found at asparagine 702, asparagine 859, asparagine 896, and asparagine 923. Positions 889-927 (DCQKNNGNCSHVCLPSLITSFICACPPGMELSNDNRTCI) constitute an EGF-like 3 domain. LDL-receptor class A domains follow at residues 931-969 (ECSK…SECR), 973-1009 (RCKE…QNCE), 1012-1049 (KCKS…EDCR), 1052-1090 (ECTS…EKCY), and 1094-1131 (ACKM…VHCL). 15 cysteine pairs are disulfide-bonded: cysteine 932-cysteine 945, cysteine 939-cysteine 958, cysteine 952-cysteine 968, cysteine 974-cysteine 986, cysteine 981-cysteine 999, cysteine 993-cysteine 1008, cysteine 1013-cysteine 1026, cysteine 1020-cysteine 1039, cysteine 1033-cysteine 1048, cysteine 1053-cysteine 1065, cysteine 1060-cysteine 1078, cysteine 1072-cysteine 1089, cysteine 1095-cysteine 1108, cysteine 1103-cysteine 1121, and cysteine 1115-cysteine 1130. Residues asparagine 1133 and asparagine 1140 are each glycosylated (N-linked (GlcNAc...) asparagine). LDL-receptor class A domains lie at 1140 to 1177 (NCSL…QNCT), 1178 to 1214 (YCFE…KNCD), and 1225 to 1260 (ECDE…GKCQ). 9 disulfide bridges follow: cysteine 1141-cysteine 1154, cysteine 1148-cysteine 1167, cysteine 1161-cysteine 1176, cysteine 1179-cysteine 1191, cysteine 1186-cysteine 1204, cysteine 1198-cysteine 1213, cysteine 1226-cysteine 1236, cysteine 1231-cysteine 1249, and cysteine 1243-cysteine 1259. The N-linked (GlcNAc...) asparagine glycan is linked to asparagine 1175. The EGF-like 4 domain occupies 1262-1298 (ACTVNNFCKGMCYKTPAGAVCGCQSGYRLAVDMISCE). 3 LDL-receptor class B repeats span residues 1385-1425 (DSVY…DWIT), 1471-1518 (RWLF…DHVK), and 1519-1561 (SKLY…FEQS). Asparagine 1626, asparagine 1640, and asparagine 1656 each carry an N-linked (GlcNAc...) asparagine glycan. The helical transmembrane segment at 1664–1684 (ISGIYSITIIVLLVSVLLLCV) threads the bilayer. At 1685–1782 (YYYYQKNKLK…ALIYFVHNSK (98 aa)) the chain is on the cytoplasmic side.

In terms of tissue distribution, expressed in ovaries of reproductive females.

The protein resides in the membrane. Its function is as follows. Involved in uptake of vitellogenin by endocytosis. Expression is regulated by the juvenile hormone analog, methoprene (in vitro). This is Vitellogenin receptor from Solenopsis invicta (Red imported fire ant).